A 319-amino-acid chain; its full sequence is R-phycoerythrin gamma chain, chloroplastic (319 aa).

The N-terminal 71 residues, 1-71 (MDSPAFAVTG…RPKKLASYKR (71 aa)), are a transit peptide targeting the chloroplast. 2 residues coordinate phycourobilin: cysteine 96 and cysteine 135. Cysteine 212 serves as a coordination point for (2R,3E)-phycoerythrobilin. Cysteine 299 is a binding site for phycourobilin.

Heteromer of 4 alpha, 4 beta and one gamma chains. Post-translationally, contains four covalently linked bilin chromophores.

It localises to the plastid. The protein localises to the chloroplast thylakoid membrane. This Corallina officinalis (Coral seaweed) protein is R-phycoerythrin gamma chain, chloroplastic.